A 70-amino-acid chain; its full sequence is ATP synthase subunit c (70 aa).

2 consecutive transmembrane segments (helical) span residues 4–24 (IAAA…NGLI) and 47–67 (FIGI…SFIV).

The protein belongs to the ATPase C chain family. F-type ATPases have 2 components, F(1) - the catalytic core - and F(0) - the membrane proton channel. F(1) has five subunits: alpha(3), beta(3), gamma(1), delta(1), epsilon(1). F(0) has three main subunits: a(1), b(2) and c(10-14). The alpha and beta chains form an alternating ring which encloses part of the gamma chain. F(1) is attached to F(0) by a central stalk formed by the gamma and epsilon chains, while a peripheral stalk is formed by the delta and b chains.

It localises to the cell membrane. Functionally, f(1)F(0) ATP synthase produces ATP from ADP in the presence of a proton or sodium gradient. F-type ATPases consist of two structural domains, F(1) containing the extramembraneous catalytic core and F(0) containing the membrane proton channel, linked together by a central stalk and a peripheral stalk. During catalysis, ATP synthesis in the catalytic domain of F(1) is coupled via a rotary mechanism of the central stalk subunits to proton translocation. Its function is as follows. Key component of the F(0) channel; it plays a direct role in translocation across the membrane. A homomeric c-ring of between 10-14 subunits forms the central stalk rotor element with the F(1) delta and epsilon subunits. The sequence is that of ATP synthase subunit c from Staphylococcus carnosus (strain TM300).